The sequence spans 673 residues: Protein transport Sec1a (673 aa).

Residues 538-591 (SSHKEESEARTGSVRKSSAPTAVPERKATPHSMRSRRTATWARPHSSDDGYSSD) form a disordered region.

Belongs to the STXBP/unc-18/SEC1 family. As to quaternary structure, does not bind the syntaxin KNOLLE.

Functionally, involved in the vesicle trafficking. Binds syntaxins. In Arabidopsis thaliana (Mouse-ear cress), this protein is Protein transport Sec1a (SEC1A).